Consider the following 205-residue polypeptide: Large ribosomal subunit protein uL4 (205 aa).

The segment at 43–95 (RSGNRAQKDRAEVKHSTKKPWRQKGTGRARAGMTSSPLWRGGGRAFPNSPEEN) is disordered. Positions 48–57 (AQKDRAEVKH) are enriched in basic and acidic residues. Positions 58-69 (STKKPWRQKGTG) are enriched in basic residues.

This sequence belongs to the universal ribosomal protein uL4 family. As to quaternary structure, part of the 50S ribosomal subunit.

One of the primary rRNA binding proteins, this protein initially binds near the 5'-end of the 23S rRNA. It is important during the early stages of 50S assembly. It makes multiple contacts with different domains of the 23S rRNA in the assembled 50S subunit and ribosome. In terms of biological role, forms part of the polypeptide exit tunnel. This chain is Large ribosomal subunit protein uL4, found in Bordetella pertussis (strain Tohama I / ATCC BAA-589 / NCTC 13251).